The primary structure comprises 206 residues: Small ribosomal subunit protein uS4 (206 aa).

The tract at residues 18–46 is disordered; the sequence is NIWGRPKSPVNRREYGPGQHGQRRKGKLS. Positions 94–156 constitute an S4 RNA-binding domain; that stretch reads RRLDAVVYRA…SKQNVAVLEA (63 aa).

The protein belongs to the universal ribosomal protein uS4 family. Part of the 30S ribosomal subunit. Contacts protein S5. The interaction surface between S4 and S5 is involved in control of translational fidelity.

One of the primary rRNA binding proteins, it binds directly to 16S rRNA where it nucleates assembly of the body of the 30S subunit. Functionally, with S5 and S12 plays an important role in translational accuracy. This is Small ribosomal subunit protein uS4 from Ruegeria sp. (strain TM1040) (Silicibacter sp.).